The sequence spans 328 residues: Malate dehydrogenase (328 aa).

13–19 (GGTGQIA) provides a ligand contact to NAD(+). Residues arginine 94 and arginine 100 each contribute to the substrate site. NAD(+) contacts are provided by residues asparagine 107, glutamine 114, and 131-133 (VGN). Substrate is bound by residues asparagine 133 and arginine 164. Histidine 189 acts as the Proton acceptor in catalysis.

It belongs to the LDH/MDH superfamily. MDH type 2 family.

The catalysed reaction is (S)-malate + NAD(+) = oxaloacetate + NADH + H(+). Catalyzes the reversible oxidation of malate to oxaloacetate. The sequence is that of Malate dehydrogenase from Chlamydia felis (strain Fe/C-56) (Chlamydophila felis).